Consider the following 290-residue polypeptide: Ribosomal RNA small subunit methyltransferase A (290 aa).

S-adenosyl-L-methionine-binding residues include N27, L29, G54, E75, D100, and N125.

It belongs to the class I-like SAM-binding methyltransferase superfamily. rRNA adenine N(6)-methyltransferase family. RsmA subfamily.

Its subcellular location is the cytoplasm. It carries out the reaction adenosine(1518)/adenosine(1519) in 16S rRNA + 4 S-adenosyl-L-methionine = N(6)-dimethyladenosine(1518)/N(6)-dimethyladenosine(1519) in 16S rRNA + 4 S-adenosyl-L-homocysteine + 4 H(+). Specifically dimethylates two adjacent adenosines (A1518 and A1519) in the loop of a conserved hairpin near the 3'-end of 16S rRNA in the 30S particle. May play a critical role in biogenesis of 30S subunits. In Streptococcus pneumoniae (strain P1031), this protein is Ribosomal RNA small subunit methyltransferase A.